The primary structure comprises 252 residues: MTRAGFVAGNWKMYGNLVQNQELLAAIVLGIPSLQNASCAVCVPYPYLAQAQSVLKGTHVAWGGQNISQHHQGAYTGEVSAGMLTDFGCRYVIVGHSERRTLYGEDNQMVAEKFHSAQEQSLVPILCVGETLAQREANETEQVIARQLDAVIGLVGVNAIKQSVIAYEPVWAIGTGETATPQQAQDVHAFVRNRIAAHNSEIAADIQIVYGGSVKANNASELFAMPDIDGGLIGGASLVAAEFISICFAAQS.

Position 10 to 12 (10 to 12 (NWK)) interacts with substrate. The active-site Electrophile is the H96. The active-site Proton acceptor is the E168. Residues G174, S213, and 234 to 235 (GG) contribute to the substrate site.

This sequence belongs to the triosephosphate isomerase family. Homodimer.

It is found in the cytoplasm. The catalysed reaction is D-glyceraldehyde 3-phosphate = dihydroxyacetone phosphate. Its pathway is carbohydrate biosynthesis; gluconeogenesis. It functions in the pathway carbohydrate degradation; glycolysis; D-glyceraldehyde 3-phosphate from glycerone phosphate: step 1/1. Its function is as follows. Involved in the gluconeogenesis. Catalyzes stereospecifically the conversion of dihydroxyacetone phosphate (DHAP) to D-glyceraldehyde-3-phosphate (G3P). This Nitrosomonas eutropha (strain DSM 101675 / C91 / Nm57) protein is Triosephosphate isomerase.